The following is a 587-amino-acid chain: UDP-N-acetylmuramoylalanine--D-glutamate ligase (587 aa).

The segment at 124–147 is disordered; that stretch reads DHLVPPESPLSDASDISDASDATD. Positions 132-147 are enriched in low complexity; sequence PLSDASDISDASDATD. 214–220 serves as a coordination point for ATP; it reads GTNGKTT.

This sequence belongs to the MurCDEF family.

It localises to the cytoplasm. It catalyses the reaction UDP-N-acetyl-alpha-D-muramoyl-L-alanine + D-glutamate + ATP = UDP-N-acetyl-alpha-D-muramoyl-L-alanyl-D-glutamate + ADP + phosphate + H(+). It functions in the pathway cell wall biogenesis; peptidoglycan biosynthesis. Cell wall formation. Catalyzes the addition of glutamate to the nucleotide precursor UDP-N-acetylmuramoyl-L-alanine (UMA). The protein is UDP-N-acetylmuramoylalanine--D-glutamate ligase of Polaromonas sp. (strain JS666 / ATCC BAA-500).